The following is a 399-amino-acid chain: Enoyl-[acyl-carrier-protein] reductase [NADH] (399 aa).

Residues 48 to 53 (GASTGY), 74 to 75 (FE), 111 to 112 (DA), and 139 to 140 (LA) contribute to the NAD(+) site. Residue Y225 coordinates substrate. Y235 functions as the Proton donor in the catalytic mechanism. Residues K244 and 274–276 (VVT) each bind NAD(+).

Belongs to the TER reductase family. As to quaternary structure, monomer.

It catalyses the reaction a 2,3-saturated acyl-[ACP] + NAD(+) = a (2E)-enoyl-[ACP] + NADH + H(+). It functions in the pathway lipid metabolism; fatty acid biosynthesis. Functionally, involved in the final reduction of the elongation cycle of fatty acid synthesis (FAS II). Catalyzes the reduction of a carbon-carbon double bond in an enoyl moiety that is covalently linked to an acyl carrier protein (ACP). The polypeptide is Enoyl-[acyl-carrier-protein] reductase [NADH] (Yersinia enterocolitica serotype O:8 / biotype 1B (strain NCTC 13174 / 8081)).